Consider the following 705-residue polypeptide: Polyribonucleotide nucleotidyltransferase (705 aa).

The Mg(2+) site is built by Asp-492 and Asp-498. One can recognise a KH domain in the interval 559–618 (PLMITMKVSPDKIRHIIGPGGKIINKIIDETGVEIDIDDDGSVYILAQDQESGNRAKEII). An S1 motif domain is found at 628-696 (GDIYEGRVKK…ELGRINLSRK (69 aa)).

This sequence belongs to the polyribonucleotide nucleotidyltransferase family. Mg(2+) is required as a cofactor.

It is found in the cytoplasm. The enzyme catalyses RNA(n+1) + phosphate = RNA(n) + a ribonucleoside 5'-diphosphate. In terms of biological role, involved in mRNA degradation. Catalyzes the phosphorolysis of single-stranded polyribonucleotides processively in the 3'- to 5'-direction. This Halothermothrix orenii (strain H 168 / OCM 544 / DSM 9562) protein is Polyribonucleotide nucleotidyltransferase.